Consider the following 486-residue polypeptide: Protein nucleotidyltransferase YdiU (486 aa).

ATP contacts are provided by Gly90, Gly92, Arg93, Lys113, Asp125, Gly126, Arg176, and Arg183. The active-site Proton acceptor is Asp252. Mg(2+) is bound by residues Asn253 and Asp262. Asp262 lines the ATP pocket.

This sequence belongs to the SELO family. Mg(2+) is required as a cofactor. The cofactor is Mn(2+).

It carries out the reaction L-seryl-[protein] + ATP = 3-O-(5'-adenylyl)-L-seryl-[protein] + diphosphate. It catalyses the reaction L-threonyl-[protein] + ATP = 3-O-(5'-adenylyl)-L-threonyl-[protein] + diphosphate. The catalysed reaction is L-tyrosyl-[protein] + ATP = O-(5'-adenylyl)-L-tyrosyl-[protein] + diphosphate. The enzyme catalyses L-histidyl-[protein] + UTP = N(tele)-(5'-uridylyl)-L-histidyl-[protein] + diphosphate. It carries out the reaction L-seryl-[protein] + UTP = O-(5'-uridylyl)-L-seryl-[protein] + diphosphate. It catalyses the reaction L-tyrosyl-[protein] + UTP = O-(5'-uridylyl)-L-tyrosyl-[protein] + diphosphate. Nucleotidyltransferase involved in the post-translational modification of proteins. It can catalyze the addition of adenosine monophosphate (AMP) or uridine monophosphate (UMP) to a protein, resulting in modifications known as AMPylation and UMPylation. The chain is Protein nucleotidyltransferase YdiU from Pseudomonas paraeruginosa (strain DSM 24068 / PA7) (Pseudomonas aeruginosa (strain PA7)).